The following is a 311-amino-acid chain: Methionyl-tRNA formyltransferase (311 aa).

111-114 (SLLP) lines the (6S)-5,6,7,8-tetrahydrofolate pocket.

This sequence belongs to the Fmt family.

The enzyme catalyses L-methionyl-tRNA(fMet) + (6R)-10-formyltetrahydrofolate = N-formyl-L-methionyl-tRNA(fMet) + (6S)-5,6,7,8-tetrahydrofolate + H(+). Attaches a formyl group to the free amino group of methionyl-tRNA(fMet). The formyl group appears to play a dual role in the initiator identity of N-formylmethionyl-tRNA by promoting its recognition by IF2 and preventing the misappropriation of this tRNA by the elongation apparatus. This Caldicellulosiruptor saccharolyticus (strain ATCC 43494 / DSM 8903 / Tp8T 6331) protein is Methionyl-tRNA formyltransferase.